A 131-amino-acid chain; its full sequence is Cuticle protein 79, isoform A (131 aa).

A run of 3 repeats spans residues 37–40 (AAPA), 45–48 (AAPA), and 53–56 (AAPA).

Its function is as follows. Component of the cuticle of migratory locust which contains more than 100 different structural proteins. The chain is Cuticle protein 79, isoform A from Locusta migratoria (Migratory locust).